The sequence spans 125 residues: Large ribosomal subunit protein bL12 (125 aa).

It belongs to the bacterial ribosomal protein bL12 family. Homodimer. Part of the ribosomal stalk of the 50S ribosomal subunit. Forms a multimeric L10(L12)X complex, where L10 forms an elongated spine to which 2 to 4 L12 dimers bind in a sequential fashion. Binds GTP-bound translation factors.

In terms of biological role, forms part of the ribosomal stalk which helps the ribosome interact with GTP-bound translation factors. Is thus essential for accurate translation. This chain is Large ribosomal subunit protein bL12, found in Rickettsia prowazekii (strain Madrid E).